We begin with the raw amino-acid sequence, 267 residues long: Cerberus (267 aa).

A signal peptide spans 1–17; sequence MHLLLFQLLVLLPLGKT. Disordered regions lie at residues 19–52 and 87–113; these read RHQD…EAEE and WKKP…QSLI. An N-linked (GlcNAc...) asparagine glycan is attached at Asn-26. A compositionally biased stretch (basic and acidic residues) spans 88–101; sequence KKPEREMHPSRDSD. Cystine bridges form between Cys-162-Cys-209, Cys-176-Cys-223, Cys-186-Cys-239, and Cys-190-Cys-241. The region spanning 162–246 is the CTCK domain; it reads CRTVPFSQTI…EECQCKVKTE (85 aa). The N-linked (GlcNAc...) asparagine glycan is linked to Asn-222.

Belongs to the DAN family. As to quaternary structure, forms monomers and predominantly dimers. N-glycosylated.

The protein localises to the secreted. Functionally, cytokine that may play a role in anterior neural induction and somite formation during embryogenesis in part through a BMP-inhibitory mechanism. Can regulate Nodal signaling during gastrulation as well as the formation and patterning of the primitive streak. This Homo sapiens (Human) protein is Cerberus (CER1).